Here is a 101-residue protein sequence, read N- to C-terminus: Small ribosomal subunit protein uS14 (101 aa).

It belongs to the universal ribosomal protein uS14 family. In terms of assembly, part of the 30S ribosomal subunit. Contacts proteins S3 and S10.

Binds 16S rRNA, required for the assembly of 30S particles and may also be responsible for determining the conformation of the 16S rRNA at the A site. This is Small ribosomal subunit protein uS14 from Bartonella bacilliformis (strain ATCC 35685 / KC583 / Herrer 020/F12,63).